A 533-amino-acid polypeptide reads, in one-letter code: Adenosine deaminase (533 aa).

The first 19 residues, 1–19 (MKILLAVVFVLNLTNLAVP), serve as a signal peptide directing secretion.

This sequence belongs to the metallo-dependent hydrolases superfamily. Adenosine and AMP deaminases family. ADGF subfamily. Requires Zn(2+) as cofactor. In terms of processing, proteolytically cleaved by human mast cell tryptase and chymase. As to expression, female salivary gland (at protein level).

The protein resides in the secreted. It catalyses the reaction adenosine + H2O + H(+) = inosine + NH4(+). It carries out the reaction 2'-deoxyadenosine + H2O + H(+) = 2'-deoxyinosine + NH4(+). Functionally, catalyzes the deamination of adenosine to inosine and deoxyadenosine to deoxyinosine. Induces degranulation of host mast cells, and secretion of tryptase and IL6. Modulates enzymatic activities of human tryptase and chymase. Induces release of cytokines, such as IL1B, IL6, TNF, CCL2, IFN-beta (INFB1) and ISG15, from host monocytes and macrophages. Activates host NF-kappa-B signaling pathway in TAK1/MAP3K7-dependent manner. Its function is as follows. (Microbial infection) Promotes replication of dengue virus type 2 in host cells probably via modulation of cytokine production in host macrophages and monocytes. This chain is Adenosine deaminase, found in Aedes albopictus (Asian tiger mosquito).